The primary structure comprises 435 residues: GPI-anchor transamidase component PIGU (435 aa).

Over Met1–Ala3 the chain is Cytoplasmic. The helical transmembrane segment at Pro4–Ser22 threads the bilayer. The Lumenal portion of the chain corresponds to Ser23–Asp78. The helical transmembrane segment at Tyr79–Ile99 threads the bilayer. The Cytoplasmic segment spans residues Gln100–Ile136. The next 4 helical transmembrane spans lie at Pro137–Ser158, Thr159–Ser178, Val179–Leu194, and Tyr195–Leu205. Over Tyr206–Phe222 the chain is Cytoplasmic. Residue Lys216 participates in a cardiolipin binding. Residues Trp223 to Ser244 traverse the membrane as a helical segment. At Phe245–Ser286 the chain is on the lumenal side. The chain crosses the membrane as a helical span at residues Leu287 to Ile306. Over Lys307–His311 the chain is Cytoplasmic. Lys309 is an a cardiolipin binding site. Transmembrane regions (helical) follow at residues Pro312 to Thr331 and Val332 to Trp345. At Asn346 to Asn354 the chain is on the cytoplasmic side. Residues Val355–Leu372 traverse the membrane as a helical segment. Over Trp373–Ser384 the chain is Lumenal. A 2-acyl-6-[6-phosphoethanolamine-alpha-D-mannosyl-(1-&gt;2)-6-phosphoethanolamine-alpha-D-mannosyl-(1-&gt;6)-2-phosphoethanolamine-alpha-D-mannosyl-(1-&gt;4)-alpha-D-glucosaminyl]-1-(1-radyl,2-acyl-sn-glycero-3-phospho)-1D-myo-inositol contacts are provided by Asn383 and Asn385. Residues Asn385–Phe406 form a helical membrane-spanning segment. Residues Tyr407 to Lys435 are Cytoplasmic-facing.

The protein belongs to the PIGU family. As to quaternary structure, heteropentamer. Part of the GPI-anchor transamidase complex, consisting of PIGK, PIGT, PIGS, PIGU and GAA1.

Its subcellular location is the endoplasmic reticulum membrane. It participates in glycolipid biosynthesis; glycosylphosphatidylinositol-anchor biosynthesis. Component of the glycosylphosphatidylinositol-anchor (GPI-anchor) transamidase (GPI-T) complex that catalyzes the formation of the linkage between a proprotein and a GPI-anchor and participates in GPI anchored protein biosynthesis. Binds the lipid portion of GPI-anchor. May act as an organizer in the transmembrane layer to recruit other subunits, and thus is essential for assembly of the complex. The sequence is that of GPI-anchor transamidase component PIGU from Cricetulus griseus (Chinese hamster).